The chain runs to 349 residues: Flap endonuclease 1 (349 aa).

Residues 1–98 (MDLGEIVEDV…EEIERRKRAK (98 aa)) form an N-domain region. The Mg(2+) site is built by Asp-27, Asp-80, Glu-152, Glu-154, Asp-173, Asp-175, and Asp-236. Residues 116–258 (EIRKYAQAAV…TALRIIKKYN (143 aa)) form an I-domain region. An interaction with PCNA region spans residues 341–349 (KQTGLDQWF).

Belongs to the XPG/RAD2 endonuclease family. FEN1 subfamily. As to quaternary structure, interacts with PCNA. PCNA stimulates the nuclease activity without altering cleavage specificity. Mg(2+) serves as cofactor.

Functionally, structure-specific nuclease with 5'-flap endonuclease and 5'-3' exonuclease activities involved in DNA replication and repair. During DNA replication, cleaves the 5'-overhanging flap structure that is generated by displacement synthesis when DNA polymerase encounters the 5'-end of a downstream Okazaki fragment. Binds the unpaired 3'-DNA end and kinks the DNA to facilitate 5' cleavage specificity. Cleaves one nucleotide into the double-stranded DNA from the junction in flap DNA, leaving a nick for ligation. Also involved in the base excision repair (BER) pathway. Acts as a genome stabilization factor that prevents flaps from equilibrating into structures that lead to duplications and deletions. Also possesses 5'-3' exonuclease activity on nicked or gapped double-stranded DNA. The sequence is that of Flap endonuclease 1 from Sulfolobus acidocaldarius (strain ATCC 33909 / DSM 639 / JCM 8929 / NBRC 15157 / NCIMB 11770).